A 101-amino-acid polypeptide reads, in one-letter code: NADH-quinone oxidoreductase subunit K (101 aa).

The next 3 helical transmembrane spans lie at L4–L24, I30–F50, and F62–V82.

Belongs to the complex I subunit 4L family. In terms of assembly, NDH-1 is composed of 14 different subunits. Subunits NuoA, H, J, K, L, M, N constitute the membrane sector of the complex.

Its subcellular location is the cell inner membrane. The catalysed reaction is a quinone + NADH + 5 H(+)(in) = a quinol + NAD(+) + 4 H(+)(out). In terms of biological role, NDH-1 shuttles electrons from NADH, via FMN and iron-sulfur (Fe-S) centers, to quinones in the respiratory chain. The immediate electron acceptor for the enzyme in this species is believed to be ubiquinone. Couples the redox reaction to proton translocation (for every two electrons transferred, four hydrogen ions are translocated across the cytoplasmic membrane), and thus conserves the redox energy in a proton gradient. This Stenotrophomonas maltophilia (strain R551-3) protein is NADH-quinone oxidoreductase subunit K.